Consider the following 185-residue polypeptide: Ribosome-recycling factor (185 aa).

Belongs to the RRF family.

Its subcellular location is the cytoplasm. Its function is as follows. Responsible for the release of ribosomes from messenger RNA at the termination of protein biosynthesis. May increase the efficiency of translation by recycling ribosomes from one round of translation to another. The protein is Ribosome-recycling factor of Dichelobacter nodosus (strain VCS1703A).